The chain runs to 247 residues: ATP synthase subunit a, chloroplastic (247 aa).

5 helical membrane passes run 38–58, 95–115, 134–154, 199–219, and 220–240; these read QVLITSWVVITILLGSVIIAV, VPFIGTMFLFIFVSNWSGALL, INTTVALALLTSAAYFYAGLS, LVVVVLVSLVPLVVPIPVMFL, and GLFTSGIQALIFATLAAAYIG.

Belongs to the ATPase A chain family. In terms of assembly, F-type ATPases have 2 components, CF(1) - the catalytic core - and CF(0) - the membrane proton channel. CF(1) has five subunits: alpha(3), beta(3), gamma(1), delta(1), epsilon(1). CF(0) has four main subunits: a, b, b' and c.

Its subcellular location is the plastid. The protein localises to the chloroplast thylakoid membrane. Key component of the proton channel; it plays a direct role in the translocation of protons across the membrane. The chain is ATP synthase subunit a, chloroplastic from Zea mays (Maize).